Consider the following 484-residue polypeptide: Protein nucleotidyltransferase YdiU (484 aa).

G81, G83, R84, K103, D115, G116, R166, and R173 together coordinate ATP. Residue D244 is the Proton acceptor of the active site. N245 and D254 together coordinate Mg(2+). D254 provides a ligand contact to ATP.

Belongs to the SELO family. Requires Mg(2+) as cofactor. Mn(2+) serves as cofactor.

The enzyme catalyses L-seryl-[protein] + ATP = 3-O-(5'-adenylyl)-L-seryl-[protein] + diphosphate. The catalysed reaction is L-threonyl-[protein] + ATP = 3-O-(5'-adenylyl)-L-threonyl-[protein] + diphosphate. It carries out the reaction L-tyrosyl-[protein] + ATP = O-(5'-adenylyl)-L-tyrosyl-[protein] + diphosphate. It catalyses the reaction L-histidyl-[protein] + UTP = N(tele)-(5'-uridylyl)-L-histidyl-[protein] + diphosphate. The enzyme catalyses L-seryl-[protein] + UTP = O-(5'-uridylyl)-L-seryl-[protein] + diphosphate. The catalysed reaction is L-tyrosyl-[protein] + UTP = O-(5'-uridylyl)-L-tyrosyl-[protein] + diphosphate. Its function is as follows. Nucleotidyltransferase involved in the post-translational modification of proteins. It can catalyze the addition of adenosine monophosphate (AMP) or uridine monophosphate (UMP) to a protein, resulting in modifications known as AMPylation and UMPylation. The sequence is that of Protein nucleotidyltransferase YdiU from Shewanella loihica (strain ATCC BAA-1088 / PV-4).